Here is a 1224-residue protein sequence, read N- to C-terminus: DNA-directed RNA polymerase subunit beta' (1224 aa).

Residues cysteine 60, cysteine 62, cysteine 75, and cysteine 78 each contribute to the Zn(2+) site. Mg(2+) is bound by residues aspartate 449, aspartate 451, and aspartate 453. Zn(2+)-binding residues include cysteine 819, cysteine 893, cysteine 900, and cysteine 903.

It belongs to the RNA polymerase beta' chain family. In terms of assembly, the RNAP catalytic core consists of 2 alpha, 1 beta, 1 beta' and 1 omega subunit. When a sigma factor is associated with the core the holoenzyme is formed, which can initiate transcription. Mg(2+) is required as a cofactor. Zn(2+) serves as cofactor.

The catalysed reaction is RNA(n) + a ribonucleoside 5'-triphosphate = RNA(n+1) + diphosphate. Functionally, DNA-dependent RNA polymerase catalyzes the transcription of DNA into RNA using the four ribonucleoside triphosphates as substrates. In Lactobacillus johnsonii (strain CNCM I-12250 / La1 / NCC 533), this protein is DNA-directed RNA polymerase subunit beta'.